The sequence spans 623 residues: Transketolase (623 aa).

Met1 is subject to N-acetylmethionine. N6-acetyllysine occurs at positions 6 and 11. His37 lines the substrate pocket. 2 residues coordinate thiamine diphosphate: Ser40 and His77. The residue at position 104 (Ser104) is a Phosphoserine. A thiamine diphosphate-binding site is contributed by 123–125; it reads GSL. An N6-acetyllysine modification is found at Lys144. Asp155 provides a ligand contact to Mg(2+). 2 residues coordinate thiamine diphosphate: Gly156 and Asn185. Asn185 and Leu187 together coordinate Mg(2+). Residues Lys204, Lys232, and Lys241 each carry the N6-acetyllysine modification. Thiamine diphosphate is bound by residues Lys244 and His258. Position 258 (His258) interacts with substrate. Lys260 carries the post-translational modification N6-acetyllysine. Phosphotyrosine is present on Tyr275. Position 287 is a phosphothreonine (Thr287). Ser295 bears the Phosphoserine mark. Arg318 lines the substrate pocket. Residue Lys352 forms a Glycyl lysine isopeptide (Lys-Gly) (interchain with G-Cter in SUMO2) linkage. The active-site Proton donor is Glu366. Residue Phe392 participates in thiamine diphosphate binding. Substrate-binding residues include His416 and Asp424. Residue Gln428 participates in thiamine diphosphate binding. Arg474 provides a ligand contact to substrate. Residues Lys538 and Lys603 each carry the N6-acetyllysine modification.

The protein belongs to the transketolase family. Homodimer. The cofactor is Mg(2+). It depends on Ca(2+) as a cofactor. Mn(2+) serves as cofactor. Requires Co(2+) as cofactor. Thiamine diphosphate is required as a cofactor.

The enzyme catalyses D-sedoheptulose 7-phosphate + D-glyceraldehyde 3-phosphate = aldehydo-D-ribose 5-phosphate + D-xylulose 5-phosphate. Catalyzes the transfer of a two-carbon ketol group from a ketose donor to an aldose acceptor, via a covalent intermediate with the cofactor thiamine pyrophosphate. This is Transketolase (TKT) from Pongo abelii (Sumatran orangutan).